The primary structure comprises 259 residues: MAVLTMKQLLEAGVHFGHRTQRWNPKMKEYIFGARKGIYIIDLQKTSKLLDEAYNFVRDKAAEGGTILFVGTKKQAQQVIKQEAERCGAFYVNHRWLGGLLTNFETIRKRIDKLIELEEMEANGEFDHLPKKEQSRLRRILEKLRKNLGGLKNMTSLPDVIYIVDPRKERNAVYEANLLKIPTVAIVDTNCDPDEIDYIIPGNDDAIRAIQLITSKIADAYLEGREGVSFGSEEAEENNQKEDNEEIFEIEDVDESEEM.

Residues 228–259 form a disordered region; that stretch reads VSFGSEEAEENNQKEDNEEIFEIEDVDESEEM. The span at 233–259 shows a compositional bias: acidic residues; it reads EEAEENNQKEDNEEIFEIEDVDESEEM.

It belongs to the universal ribosomal protein uS2 family.

The polypeptide is Small ribosomal subunit protein uS2 (Thermosipho africanus (strain TCF52B)).